Reading from the N-terminus, the 959-residue chain is Translation initiation factor IF-2 (959 aa).

Residues 1–10 (MSDKTNDDKT) are compositionally biased toward basic and acidic residues. The tract at residues 1–374 (MSDKTNDDKT…SQMQETREKI (374 aa)) is disordered. Over residues 27–37 (EQSTVRQNFSH) the composition is skewed to polar residues. 2 stretches are compositionally biased toward low complexity: residues 63-118 (AAAA…VTKP) and 128-138 (QRPGGQQAQRP). Basic and acidic residues-rich tracts occupy residues 154–225 (SEMD…EAAK) and 232–241 (ARSERRDDAR). Positions 246–284 (GARPQQAGRPQGGRPQPAGRPQQGSPRPAPIIADAAPIA) are enriched in low complexity. Basic and acidic residues predominate over residues 318 to 333 (PEVRAPKVVKGEDDRR). One can recognise a tr-type G domain in the interval 457–626 (SRPPVVTIMG…LLQAEMLDLK (170 aa)). The G1 stretch occupies residues 466–473 (GHVDHGKT). Residue 466-473 (GHVDHGKT) participates in GTP binding. The segment at 491 to 495 (GITQH) is G2. The G3 stretch occupies residues 512–515 (DTPG). GTP-binding positions include 512–516 (DTPGH) and 566–569 (NKID). The tract at residues 566-569 (NKID) is G4. A G5 region spans residues 602–604 (SAK).

The protein belongs to the TRAFAC class translation factor GTPase superfamily. Classic translation factor GTPase family. IF-2 subfamily.

Its subcellular location is the cytoplasm. One of the essential components for the initiation of protein synthesis. Protects formylmethionyl-tRNA from spontaneous hydrolysis and promotes its binding to the 30S ribosomal subunits. Also involved in the hydrolysis of GTP during the formation of the 70S ribosomal complex. In Brucella ovis (strain ATCC 25840 / 63/290 / NCTC 10512), this protein is Translation initiation factor IF-2.